Here is a 184-residue protein sequence, read N- to C-terminus: uncharacterized protein (184 aa).

A signal peptide spans 1–20; that stretch reads MTLRKILALTCLLLPMMASA.

It to H.influenzae HI_0045.

The protein resides in the periplasm. This is an uncharacterized protein from Escherichia coli (strain K12).